Consider the following 135-residue polypeptide: Small ribosomal subunit protein eS24A (135 aa).

Position 2 is an N-acetylserine (Ser-2). Phosphoserine is present on Ser-14. A Glycyl lysine isopeptide (Lys-Gly) (interchain with G-Cter in ubiquitin) cross-link involves residue Lys-21. At Ser-56 the chain carries Phosphoserine. Residues 102–135 (KASRQQRKQKKNRDKKIFGTGKRLAKKVARRNAD) are disordered. Basic residues-rich tracts occupy residues 105–115 (RQQRKQKKNRD) and 124–135 (RLAKKVARRNAD).

The protein belongs to the eukaryotic ribosomal protein eS24 family. As to quaternary structure, component of the small ribosomal subunit (SSU). Mature yeast ribosomes consist of a small (40S) and a large (60S) subunit. The 40S small subunit contains 1 molecule of ribosomal RNA (18S rRNA) and 33 different proteins (encoded by 57 genes). The large 60S subunit contains 3 rRNA molecules (25S, 5.8S and 5S rRNA) and 46 different proteins (encoded by 81 genes). N-terminally acetylated by acetyltransferase NatA. Also partially acetylated by NatC.

Its subcellular location is the cytoplasm. In terms of biological role, component of the ribosome, a large ribonucleoprotein complex responsible for the synthesis of proteins in the cell. The small ribosomal subunit (SSU) binds messenger RNAs (mRNAs) and translates the encoded message by selecting cognate aminoacyl-transfer RNA (tRNA) molecules. The large subunit (LSU) contains the ribosomal catalytic site termed the peptidyl transferase center (PTC), which catalyzes the formation of peptide bonds, thereby polymerizing the amino acids delivered by tRNAs into a polypeptide chain. The nascent polypeptides leave the ribosome through a tunnel in the LSU and interact with protein factors that function in enzymatic processing, targeting, and the membrane insertion of nascent chains at the exit of the ribosomal tunnel. The chain is Small ribosomal subunit protein eS24A from Saccharomyces cerevisiae (strain ATCC 204508 / S288c) (Baker's yeast).